The chain runs to 469 residues: MTSQLHKKGEAWSARFSEPMSELVKRYTSSVFFDKRLALVDIAGSLAHAGMLAAQKIISADDLAAIEHGMAQIKGEIERGEFEWQLDLEDVHLNIEARLTALIGDAGKRLHTGRSRNDQVATDIRLWLRGEIDRIGGLLNDLRGALIDLAEQNADTILPGFTHLQVAQPVTFGHHLLAYVEMFSRDAERMRDCRARVNRLPLGAAALAGTSYPIDRHAVAKTLGFDGICANSLDAVSDRDFAIEFTAAAALVMTHVSRFSEELVLWMSPRVGFIDIADRFCTGSSIMPQKKNPDVPELARGKTGRVNGHLMALLTLMKGQPLAYNKDNQEDKEPLFDTVDTVADTLRIFAEMVAGITVKPDAMRAAALQGFSTATDLADYLVKRGLPFRDAHEAVAHAVKICDARGIDLADLTLDEMKQELPNVAHLIGSDVFDYLTLEGSVASRSHPGGTAPDQVRAAAKAARAALGK.

The protein belongs to the lyase 1 family. Argininosuccinate lyase subfamily.

It localises to the cytoplasm. The catalysed reaction is 2-(N(omega)-L-arginino)succinate = fumarate + L-arginine. It participates in amino-acid biosynthesis; L-arginine biosynthesis; L-arginine from L-ornithine and carbamoyl phosphate: step 3/3. In Burkholderia thailandensis (strain ATCC 700388 / DSM 13276 / CCUG 48851 / CIP 106301 / E264), this protein is Argininosuccinate lyase.